We begin with the raw amino-acid sequence, 159 residues long: Transcriptional repressor NrdR (159 aa).

A compositionally biased stretch (polar residues) spans 1 to 11; sequence MQCPTCQNTDS. The interval 1–21 is disordered; it reads MQCPTCQNTDSRVLESRSADS. Residues 3 to 34 fold into a zinc finger; that stretch reads CPTCQNTDSRVLESRSADSGKSVRRRRECLNC. The ATP-cone domain maps to 49–139; the sequence is VSVLKKDGGR…VYRKFNGVKD (91 aa).

The protein belongs to the NrdR family. Zn(2+) serves as cofactor.

Functionally, negatively regulates transcription of bacterial ribonucleotide reductase nrd genes and operons by binding to NrdR-boxes. This chain is Transcriptional repressor NrdR, found in Prochlorococcus marinus (strain AS9601).